We begin with the raw amino-acid sequence, 339 residues long: Very-long-chain 3-oxoacyl-CoA reductase (339 aa).

The chain crosses the membrane as a helical span at residues 19-39 (VALFLLSIGGLFTACKLFSFC). Residues L64, K105, D119, D127, N146, Y213, K217, V246, and S248 each coordinate NADP(+). Catalysis depends on Y213, which acts as the Proton donor. K217 acts as the Lowers pKa of active site Tyr in catalysis.

This sequence belongs to the short-chain dehydrogenases/reductases (SDR) family.

The protein localises to the endoplasmic reticulum membrane. The enzyme catalyses a very-long-chain (3R)-3-hydroxyacyl-CoA + NADP(+) = a very-long-chain 3-oxoacyl-CoA + NADPH + H(+). It functions in the pathway lipid metabolism; fatty acid biosynthesis. Functionally, component of the microsomal membrane bound fatty acid elongation system, which produces the 26-carbon very long-chain fatty acids (VLCFA) from palmitate. Catalyzes the reduction of the 3-ketoacyl-CoA intermediate that is formed in each cycle of fatty acid elongation. VLCFAs serve as precursors for ceramide and sphingolipids. The polypeptide is Very-long-chain 3-oxoacyl-CoA reductase (Ajellomyces capsulatus (strain NAm1 / WU24) (Darling's disease fungus)).